The following is a 721-amino-acid chain: Polyphosphate kinase (721 aa).

Asn-47 is a binding site for ATP. Residues Arg-377 and Arg-407 each contribute to the Mg(2+) site. Residue His-437 is the Phosphohistidine intermediate of the active site. Tyr-471, Arg-567, and His-595 together coordinate ATP.

This sequence belongs to the polyphosphate kinase 1 (PPK1) family. Mg(2+) serves as cofactor. An intermediate of this reaction is the autophosphorylated ppk in which a phosphate is covalently linked to a histidine residue through a N-P bond.

It carries out the reaction [phosphate](n) + ATP = [phosphate](n+1) + ADP. In terms of biological role, catalyzes the reversible transfer of the terminal phosphate of ATP to form a long-chain polyphosphate (polyP). The polypeptide is Polyphosphate kinase (Exiguobacterium sp. (strain ATCC BAA-1283 / AT1b)).